Consider the following 279-residue polypeptide: Thioredoxin-like 1-1, chloroplastic (279 aa).

The region spanning 56-202 is the Thioredoxin domain; the sequence is ALTERKARPL…FKDALAKHGP (147 aa). Active-site nucleophile residues include C125 and C128. A disulfide bridge connects residues C125 and C128.

Belongs to the thioredoxin family.

Functionally, probable thiol-disulfide oxidoreductase that may participate in various redox reactions. The chain is Thioredoxin-like 1-1, chloroplastic from Oryza sativa subsp. japonica (Rice).